We begin with the raw amino-acid sequence, 115 residues long: Probable non-functional immunoglobulin heavy variable 3-38-3 (115 aa).

The signal sequence occupies residues methionine 1–cysteine 19. A framework-1 region spans residues glutamate 20 to serine 44. In terms of domain architecture, Ig-like spans valine 31–lysine 115. Cysteine 41 and cysteine 113 are joined by a disulfide. Residues glycine 45–glutamate 52 form a complementarity-determining-1 region. A framework-2 region spans residues methionine 53 to serine 69. Residues isoleucine 70 to threonine 75 form a complementarity-determining-2 region. Positions tyrosine 76 to cysteine 113 are framework-3. A complementarity-determining-3 region spans residues lysine 114–lysine 115.

In terms of assembly, immunoglobulins are composed of two identical heavy chains and two identical light chains; disulfide-linked.

The protein localises to the secreted. It localises to the cell membrane. Probable non-functional open reading frame (ORF) of V region of the variable domain of immunoglobulin heavy chains. Non-functional ORF generally cannot participate in the synthesis of a productive immunoglobulin chain due to altered V-(D)-J or switch recombination and/or splicing site (at mRNA level) and/or conserved amino acid change (protein level). Immunoglobulins, also known as antibodies, are membrane-bound or secreted glycoproteins produced by B lymphocytes. In the recognition phase of humoral immunity, the membrane-bound immunoglobulins serve as receptors which, upon binding of a specific antigen, trigger the clonal expansion and differentiation of B lymphocytes into immunoglobulins-secreting plasma cells. Secreted immunoglobulins mediate the effector phase of humoral immunity, which results in the elimination of bound antigens. The antigen binding site is formed by the variable domain of one heavy chain, together with that of its associated light chain. Thus, each immunoglobulin has two antigen binding sites with remarkable affinity for a particular antigen. The variable domains are assembled by a process called V-(D)-J rearrangement and can then be subjected to somatic hypermutations which, after exposure to antigen and selection, allow affinity maturation for a particular antigen. This Homo sapiens (Human) protein is Probable non-functional immunoglobulin heavy variable 3-38-3.